The primary structure comprises 1163 residues: Voltage-gated inwardly rectifying potassium channel KCNH2 (1163 aa).

The Cytoplasmic segment spans residues 1-405 (MPVRRGHVAP…RIHRWTILHY (405 aa)). The PAS domain maps to 17 to 88 (TIIRKFEGQS…AAQIAQALLG (72 aa)). A PAC domain is found at 92-144 (RKVEIAFYRKDGSCFLCLVDVVPVKNEDGAVIMFILNFEVVMEKDMVGSPAHD). The tract at residues 235-286 (VGPASASPVASIPGPHPSPRAQSLNPDASGSSCSLARTRSRESCASVRRASS) is disordered. A phosphoserine mark is found at serine 239 and serine 245. Over residues 254 to 271 (RAQSLNPDASGSSCSLAR) the composition is skewed to polar residues. Residues serine 285, serine 286, serine 322, and serine 353 each carry the phosphoserine modification. A helical transmembrane segment spans residues 406–426 (SPFKAVWDWLILLLVIYTAVF). Over 427–452 (TPYSAAFLLKETEDGSQAPDCGYACQ) the chain is Extracellular. Residues 453-473 (PLAVVDLLVDIMFIVDILINF) traverse the membrane as a helical segment. Residues 474–497 (RTTYVNANEEVVSHPGRIAVHYFK) are Cytoplasmic-facing. The chain crosses the membrane as a helical span at residues 498–518 (GWFLIDMVAAIPFDLLIFGSG). Topologically, residues 519 to 522 (SEEL) are extracellular. A helical; Voltage-sensor membrane pass occupies residues 523–543 (IGLLKTARLLRLVRVARKLDR). At 544–549 (YSEYGA) the chain is on the cytoplasmic side. Residues 550-570 (AVLFLLMCTFALIAHWLACIW) form a helical membrane-spanning segment. Residues 571 to 613 (YAIGNMEQPHMDSHIGWLHNLGDQIGKPYNSSGLGGPSIKDKY) are Extracellular-facing. N-linked (GlcNAc...) asparagine glycosylation occurs at asparagine 600. Positions 614–634 (VTALYFTFSSLTSVGFGNVSP) form an intramembrane region, pore-forming. Residues 626-631 (SVGFGN) carry the Selectivity filter motif. Topologically, residues 635 to 640 (NTNSEK) are extracellular. A helical membrane pass occupies residues 641–661 (IFSICVMLIGSLMYASIFGNV). The Cytoplasmic portion of the chain corresponds to 662-1163 (SAIIQRLYSG…LHRHGSDPGS (502 aa)). The interval 744–844 (PFRGATKGCL…IHRDDLLEVL (101 aa)) is cNMP-binding domain. Phosphoserine is present on residues serine 873 and serine 876. 3 disordered regions span residues 873–992 (SPSS…NPLS), 1015–1043 (ELPR…GDVE), and 1126–1163 (AGAP…DPGS). A compositionally biased stretch (basic residues) spans 885 to 894 (RQRKRKLSFR). The segment covering 932–943 (GESPSSGPSSPE) has biased composition (low complexity). Arginine 1018 is subject to Omega-N-methylarginine. Residues 1039-1066 (RGDVESRLDALQRQLNRLETRLSADMAT) are a coiled coil. Serine 1141 is modified (phosphoserine).

Belongs to the potassium channel family. H (Eag) (TC 1.A.1.20) subfamily. Kv11.1/KCNH2 sub-subfamily. In terms of assembly, the potassium channel is probably composed of a homo- or heterotetrameric complex of pore-forming alpha subunits that can associate with modulating beta subunits. Interacts with DNAJB12 and DNAJB14; chaperones DNAJB12 and DNAJB14 promote tetramerization. Heteromultimer with KCNH6/ERG2 and KCNH7/ERG3. Interacts with ALG10B. Forms a stable complex with KCNE1 or KCNE2, and that this heteromultimerization regulates Inward rectifier potassium channel activity. Interacts with CANX. The core-glycosylated, but not the fully glycosylated form interacts with RNF207. Interacts with NDFIP1 and NDFIP2; this interaction decreases the cell membrane expression by targeting KCNH2, through interaction with NEDD4L, for the degradation through the multivesicular bodies (MVBs)-lysosomal pathway. Post-translationally, phosphorylated on serine and threonine residues. Phosphorylation by PKA inhibits ion conduction. As to expression, highly expressed in brain and testis, slightly less so in heart, adrenal, retina and thymus. Detected at lower levels in lung, soleus, tibialis, and at very low levels in cornea and lens. A shorter transcript is detected in skeletal muscle. Found in pituitary.

The protein resides in the cell membrane. The enzyme catalyses K(+)(in) = K(+)(out). Functionally, pore-forming (alpha) subunit of voltage-gated inwardly rectifying potassium channel. Characterized by unusual gating kinetics by producing relatively small outward currents during membrane depolarization and large inward currents during subsequent repolarization which reflect a rapid inactivation during depolarization and quick recovery from inactivation but slow deactivation (closing) during repolarization. Channel properties are modulated by cAMP and subunit assembly. Forms a stable complex with KCNE1 or KCNE2, and that this heteromultimerization regulates inward rectifier potassium channel activity. This chain is Voltage-gated inwardly rectifying potassium channel KCNH2, found in Rattus norvegicus (Rat).